The chain runs to 442 residues: Probable 6-phospho-beta-glucosidase (442 aa).

5–73 (LKIVTIGGGS…VPIDIHLTLD (69 aa)) lines the NAD(+) pocket. Positions 96 and 150 each coordinate substrate. Positions 172 and 202 each coordinate Mn(2+). Tyr256 functions as the Proton acceptor in the catalytic mechanism.

The protein belongs to the glycosyl hydrolase 4 family. NAD(+) is required as a cofactor. The cofactor is a divalent metal cation.

The catalysed reaction is 6-phospho-beta-D-glucosyl-(1-&gt;4)-D-glucose + H2O = D-glucose 6-phosphate + D-glucose. Hydrolyzes phospho-beta-glucosides. The chain is Probable 6-phospho-beta-glucosidase (licH) from Bacillus subtilis (strain 168).